The sequence spans 267 residues: MNDINPAFVMPDVQSSPDTRQIPIQRVGVKGVRYPVTLKTPAGIMPSVGTFNLDVHLPADQKGTHMSRFVALLEEERAPLELSSFRLMLDKMLEKLEAEAGRIEVTFPYFISKTAPVSGVESLLDYEVTLTGEVRDGAARVFLKALVPVTSLCPCSKKISQYGAHNQRSHITMNVELAGELPVEALVRMAEEEASCELWGLLKRPDEKFVTERAYENPKFVEDLVRDIAMRLNADDRIVAYVLEAENFESIHNHSAYAVIERDKRVD.

This sequence belongs to the GTP cyclohydrolase IV family.

The catalysed reaction is GTP + H2O = 7,8-dihydroneopterin 3'-triphosphate + formate + H(+). It participates in cofactor biosynthesis; 7,8-dihydroneopterin triphosphate biosynthesis; 7,8-dihydroneopterin triphosphate from GTP: step 1/1. Its function is as follows. Converts GTP to 7,8-dihydroneopterin triphosphate. This Cupriavidus necator (strain ATCC 17699 / DSM 428 / KCTC 22496 / NCIMB 10442 / H16 / Stanier 337) (Ralstonia eutropha) protein is GTP cyclohydrolase FolE2.